We begin with the raw amino-acid sequence, 566 residues long: Amidophosphoribosyltransferase 1, chloroplastic (566 aa).

The segment covering Met1–Leu13 has biased composition (low complexity). Disordered regions lie at residues Met1–Pro28 and Val58–Pro87. Residues Met1 to Val58 constitute a chloroplast transit peptide. The segment covering Thr15 to Gln25 has biased composition (polar residues). Low complexity predominate over residues Ser59–Ser68. Over residues Asp70–Pro87 the composition is skewed to basic and acidic residues. The active-site Nucleophile is Cys91. The Glutamine amidotransferase type-2 domain maps to Cys91–Asp311. [4Fe-4S] cluster contacts are provided by Cys327, Cys473, Cys524, and Cys527.

The protein in the C-terminal section; belongs to the purine/pyrimidine phosphoribosyltransferase family. The cofactor is [4Fe-4S] cluster. Requires Mg(2+) as cofactor. In terms of tissue distribution, expressed in flowers and roots. Also present in leaves, and, to a lower extent, in cotyledons.

The protein localises to the plastid. Its subcellular location is the chloroplast stroma. It carries out the reaction 5-phospho-beta-D-ribosylamine + L-glutamate + diphosphate = 5-phospho-alpha-D-ribose 1-diphosphate + L-glutamine + H2O. The protein operates within purine metabolism; IMP biosynthesis via de novo pathway; N(1)-(5-phospho-D-ribosyl)glycinamide from 5-phospho-alpha-D-ribose 1-diphosphate: step 1/2. Functionally, catalyzes the first committed step of 'de novo' purine biosynthesis from glutamine. Involved in plastid biogenesis and cell division. This chain is Amidophosphoribosyltransferase 1, chloroplastic (ASE1), found in Arabidopsis thaliana (Mouse-ear cress).